The chain runs to 164 residues: MLTYQVKQGDTLNSIAADFRISTAALLQANPSLQAGLTAGQSIVIPGLPDPYTIPYHIAVSIGAKTLTLSLNNRVMKTYPIAVGKILTQTPTGEFYIINRQRNPGGPFGAYWLSLSKQHYGIHGTNNPASIGKAVSKGCIRMHNKDVIELASIVPNGTRVTINR.

One can recognise a LysM domain in the interval 2–45 (LTYQVKQGDTLNSIAADFRISTAALLQANPSLQAGLTAGQSIVI). The region spanning 56 to 163 (YHIAVSIGAK…VPNGTRVTIN (108 aa)) is the L,D-TPase catalytic domain. The active-site Proton donor/acceptor is histidine 123. The Nucleophile role is filled by cysteine 139.

It belongs to the YkuD family. In terms of assembly, monomer.

It localises to the spore wall. Its pathway is cell wall biogenesis; peptidoglycan biosynthesis. In terms of biological role, probable enzyme that may play an important role in cell wall biology. The polypeptide is Putative L,D-transpeptidase YkuD (ykuD) (Bacillus subtilis (strain 168)).